A 37-amino-acid chain; its full sequence is Cytochrome b6-f complex subunit 5 (37 aa).

The chain crosses the membrane as a helical span at residues 5–25 (LLSGIVLGLVPVTIAGLFVTA).

The protein belongs to the PetG family. In terms of assembly, the 4 large subunits of the cytochrome b6-f complex are cytochrome b6, subunit IV (17 kDa polypeptide, PetD), cytochrome f and the Rieske protein, while the 4 small subunits are PetG, PetL, PetM and PetN. The complex functions as a dimer.

Its subcellular location is the plastid. The protein localises to the chloroplast thylakoid membrane. In terms of biological role, component of the cytochrome b6-f complex, which mediates electron transfer between photosystem II (PSII) and photosystem I (PSI), cyclic electron flow around PSI, and state transitions. PetG is required for either the stability or assembly of the cytochrome b6-f complex. The polypeptide is Cytochrome b6-f complex subunit 5 (Chlamydomonas moewusii (Chlamydomonas eugametos)).